The sequence spans 1129 residues: Translation initiation factor IF-2 (1129 aa).

2 stretches are compositionally biased toward low complexity: residues 33–42 (AARSHSSSIS) and 56–99 (GGSP…AAKP). Disordered regions lie at residues 33–462 (AARS…IGEN) and 485–515 (SLAR…ETAR). Over residues 100-112 (SPKPSAPSRPEAP) the composition is skewed to pro residues. A compositionally biased stretch (low complexity) spans 135–147 (STPAAAAPAAAPS). Over residues 148 to 161 (APAPSAPTPRPKPT) the composition is skewed to pro residues. Positions 162–175 (APKASAPAPTASAP) are enriched in low complexity. 2 stretches are compositionally biased toward pro residues: residues 176–191 (SAPP…PAPA) and 211–221 (PTAPPTRPQPK). The span at 257–273 (GQRPGVSPRPSGPPGQR) shows a compositional bias: low complexity. Residues 431 to 445 (GRPDWDDSAKLEALR) show a composition bias toward basic and acidic residues. Basic residues-rich tracts occupy residues 490-499 (SKPRTKHKPA) and 506-515 (IRKRRKETAR). A tr-type G domain is found at 621–793 (RRPPVVTVMG…ILLVTEVEDL (173 aa)). Residues 630–637 (GHVDHGKT) are G1. Residue 630-637 (GHVDHGKT) participates in GTP binding. Positions 655–659 (GITQH) are G2. A G3 region spans residues 680–683 (DTPG). GTP contacts are provided by residues 680-684 (DTPGH) and 734-737 (NKID). The tract at residues 734–737 (NKID) is G4. The tract at residues 770–772 (SAL) is G5.

It belongs to the TRAFAC class translation factor GTPase superfamily. Classic translation factor GTPase family. IF-2 subfamily.

The protein localises to the cytoplasm. One of the essential components for the initiation of protein synthesis. Protects formylmethionyl-tRNA from spontaneous hydrolysis and promotes its binding to the 30S ribosomal subunits. Also involved in the hydrolysis of GTP during the formation of the 70S ribosomal complex. The polypeptide is Translation initiation factor IF-2 (Synechococcus sp. (strain CC9311)).